A 359-amino-acid polypeptide reads, in one-letter code: Src kinase-associated phosphoprotein 2 (359 aa).

A phosphoserine mark is found at S5, S6, and S9. The interval 14–64 (PEEIRNLLADVETFVADILKGENLSKKAKEKRESLIKKIKDVKSIYLQEFQ) is homodimerization. Residues 66–88 (KGDAEDGEEYDDPFAGPPDTISL) form a disordered region. Y75 is modified (phosphotyrosine). Phosphoserine is present on residues S87 and S90. One can recognise a PH domain in the interval 116-219 (FVLKAGYLEK…WVQQLKFVLQ (104 aa)). A phosphotyrosine mark is found at Y151 and Y197. Position 223 is a phosphoserine (S223). Y261 carries the phosphotyrosine modification. Positions 264–293 (LPEEEEDSAPVKVEEQRKMSQDSVHHTSGD) are disordered. Residues 275–293 (KVEEQRKMSQDSVHHTSGD) are compositionally biased toward basic and acidic residues. Phosphoserine is present on residues S283 and S286. The 62-residue stretch at 297 to 358 (DYANFYQGLW…PKAYIMEMYD (62 aa)) folds into the SH3 domain.

It belongs to the SKAP family. In terms of assembly, homodimer. Interacts with PTPNS1. Part of a complex consisting of SKAP2, FYB1 and PTPNS1. Part of a complex consisting of SKAP2, FYB1 and LILRB3. May interact with actin. Interacts with FYB1, which is required for SKAP2 protein stability. Interacts with LAT, GRB2, PTK2B and PRAM1. May interact with FYN, HCK and LYN. Interacts with FASLG. Phosphorylated in resting platelets. Phosphorylated by FYN on Tyr-261 upon T-cell activation. Dephosphorylated on Tyr-75 by PTPN22. In terms of tissue distribution, ubiquitously expressed. Present in platelets (at protein level).

The protein localises to the cytoplasm. In terms of biological role, may be involved in B-cell and macrophage adhesion processes. In B-cells, may act by coupling the B-cell receptor (BCR) to integrin activation. May play a role in src signaling pathway. This Homo sapiens (Human) protein is Src kinase-associated phosphoprotein 2 (SKAP2).